Reading from the N-terminus, the 155-residue chain is 6,7-dimethyl-8-ribityllumazine synthase (155 aa).

Residues Phe24, 58–60, and 82–84 contribute to the 5-amino-6-(D-ribitylamino)uracil site; these read AFE and VII. Residue 87 to 88 participates in (2S)-2-hydroxy-3-oxobutyl phosphate binding; sequence ST. Catalysis depends on His90, which acts as the Proton donor. Residue Phe115 coordinates 5-amino-6-(D-ribitylamino)uracil. Residue Arg129 participates in (2S)-2-hydroxy-3-oxobutyl phosphate binding.

It belongs to the DMRL synthase family.

It catalyses the reaction (2S)-2-hydroxy-3-oxobutyl phosphate + 5-amino-6-(D-ribitylamino)uracil = 6,7-dimethyl-8-(1-D-ribityl)lumazine + phosphate + 2 H2O + H(+). It participates in cofactor biosynthesis; riboflavin biosynthesis; riboflavin from 2-hydroxy-3-oxobutyl phosphate and 5-amino-6-(D-ribitylamino)uracil: step 1/2. Functionally, catalyzes the formation of 6,7-dimethyl-8-ribityllumazine by condensation of 5-amino-6-(D-ribitylamino)uracil with 3,4-dihydroxy-2-butanone 4-phosphate. This is the penultimate step in the biosynthesis of riboflavin. In Pelodictyon phaeoclathratiforme (strain DSM 5477 / BU-1), this protein is 6,7-dimethyl-8-ribityllumazine synthase.